Reading from the N-terminus, the 240-residue chain is Ubiquinone biosynthesis O-methyltransferase (240 aa).

S-adenosyl-L-methionine contacts are provided by Arg-44, Gly-64, Asp-85, and Met-129.

This sequence belongs to the methyltransferase superfamily. UbiG/COQ3 family.

The catalysed reaction is a 3-demethylubiquinol + S-adenosyl-L-methionine = a ubiquinol + S-adenosyl-L-homocysteine + H(+). It catalyses the reaction a 3-(all-trans-polyprenyl)benzene-1,2-diol + S-adenosyl-L-methionine = a 2-methoxy-6-(all-trans-polyprenyl)phenol + S-adenosyl-L-homocysteine + H(+). The protein operates within cofactor biosynthesis; ubiquinone biosynthesis. Its function is as follows. O-methyltransferase that catalyzes the 2 O-methylation steps in the ubiquinone biosynthetic pathway. This Escherichia coli (strain K12 / MC4100 / BW2952) protein is Ubiquinone biosynthesis O-methyltransferase.